The sequence spans 417 residues: D-galactonate dehydratase family member Dd703_0947 (417 aa).

H127 serves as a coordination point for substrate. Y158 serves as the catalytic Proton donor/acceptor. Position 223 (D223) interacts with Mg(2+). The active-site Proton donor/acceptor is the H225. E249 and E275 together coordinate Mg(2+). Residues E275, R296, H325, D329, and E352 each coordinate substrate.

Belongs to the mandelate racemase/muconate lactonizing enzyme family. GalD subfamily. Mg(2+) is required as a cofactor.

It carries out the reaction D-mannonate = 2-dehydro-3-deoxy-D-gluconate + H2O. The enzyme catalyses D-gluconate = 2-dehydro-3-deoxy-D-gluconate + H2O. Its function is as follows. Has low dehydratase activity with D-mannonate and D-gluconate, suggesting that these are not physiological substrates and that it has no significant role in the in vivo degradation of these compounds. Has no detectable activity with a panel of 70 other acid sugars (in vitro). This is D-galactonate dehydratase family member Dd703_0947 from Musicola paradisiaca (strain Ech703) (Dickeya paradisiaca).